Here is a 643-residue protein sequence, read N- to C-terminus: Phosphatidylinositol-3,5-bisphosphate 3-phosphatase MTMR2 (643 aa).

Polar residues-rich tracts occupy residues 1–12 and 23–40; these read MEKSSSCESLGS and DSLS…VHTK. The segment at 1–56 is disordered; sequence MEKSSSCESLGSQPAAARPPSVDSLSSASTSHSENSVHTKSASVVSSDSISTSADN. A phosphoserine mark is found at serine 6 and serine 9. Over residues 41–55 the composition is skewed to low complexity; the sequence is SASVVSSDSISTSAD. Residue serine 58 is modified to Phosphoserine. Residues 68-139 enclose the GRAM domain; that stretch reads NKLAEMEEPP…GVINRVEKIG (72 aa). Residues 205–580 enclose the Myotubularin phosphatase domain; it reads GWKLYDPLLE…RHLELWVGYY (376 aa). Residues asparagine 330, asparagine 355, and isoleucine 356 each contribute to the a 1,2-diacyl-sn-glycero-3-phospho-(1D-myo-inositol-3,5-bisphosphate) site. A 1,2-diacyl-sn-glycero-3-phospho-(1D-myo-inositol-3-phosphate) is bound by residues asparagine 330, asparagine 355, and isoleucine 356. Cysteine 417 acts as the Phosphocysteine intermediate in catalysis. Serine 418, aspartate 419, glycine 420, tryptophan 421, aspartate 422, arginine 423, arginine 459, and arginine 463 together coordinate a 1,2-diacyl-sn-glycero-3-phospho-(1D-myo-inositol-3,5-bisphosphate). A 1,2-diacyl-sn-glycero-3-phospho-(1D-myo-inositol-3-phosphate) contacts are provided by serine 418, aspartate 419, glycine 420, tryptophan 421, aspartate 422, and arginine 423. An a 1,2-diacyl-sn-glycero-3-phospho-(1D-myo-inositol-3-phosphate)-binding site is contributed by arginine 463. A coiled-coil region spans residues 593 to 627; it reads IHNRYKELLAKRAELQKKVEELQREISNRSTSSSE. The disordered stretch occupies residues 615 to 643; that stretch reads QREISNRSTSSSERASSPAQCVTPVQTVV. Residues 620 to 631 show a composition bias toward low complexity; sequence NRSTSSSERASS. Polar residues predominate over residues 632-643; it reads PAQCVTPVQTVV.

The protein belongs to the protein-tyrosine phosphatase family. Non-receptor class myotubularin subfamily. In terms of assembly, homodimer (via coiled-coil domain). Heterotetramer consisting of one MTMR2 dimer and one SBF2/MTMR13 dimer; specifically in peripheral nerves stabilizes SBF2/MTMR13 at the membranes and increases MTMR2 catalytic activity towards phosphatidylinositol 3,5-bisphosphate and to a lesser extent towards phosphatidylinositol 3-phosphate. Heterodimer with SBF1/MTMR5; acts as an adapter for the phosphatase MTMR2 to regulate MTMR2 catalytic activity and subcellular location. Heterodimer with MTMR12. In terms of processing, phosphorylation at Ser-58 decreases MTMR2 localization to endocytic vesicular structures.

The protein resides in the cytoplasm. It is found in the early endosome membrane. It localises to the perinuclear region. Its subcellular location is the cell projection. The protein localises to the axon. The protein resides in the endosome membrane. It carries out the reaction a 1,2-diacyl-sn-glycero-3-phospho-(1D-myo-inositol-3,5-bisphosphate) + H2O = a 1,2-diacyl-sn-glycero-3-phospho-(1D-myo-inositol-5-phosphate) + phosphate. The catalysed reaction is a 1,2-diacyl-sn-glycero-3-phospho-(1D-myo-inositol-3-phosphate) + H2O = a 1,2-diacyl-sn-glycero-3-phospho-(1D-myo-inositol) + phosphate. It catalyses the reaction 1,2-dioctanoyl-sn-glycero-3-phospho-(1-D-myo-inositol-3-phosphate) + H2O = 1,2-dioctanoyl-sn-glycero-3-phospho-(1D-myo-inositol) + phosphate. The enzyme catalyses 1,2-dioctanoyl-sn-glycero-3-phospho-(1D-myo-inositol-3,5-bisphosphate) + H2O = 1,2-dioctanoyl-sn-glycero-3-phospho-(1D-myo-inositol-5-phosphate) + phosphate. Its function is as follows. Lipid phosphatase that specifically dephosphorylates the D-3 position of phosphatidylinositol 3-phosphate and phosphatidylinositol 3,5-bisphosphate, generating phosphatidylinositol and phosphatidylinositol 5-phosphate. Regulates the level of these phosphoinositides critical for various biological processes including autophagy initiation and autophagosome maturation. In Homo sapiens (Human), this protein is Phosphatidylinositol-3,5-bisphosphate 3-phosphatase MTMR2.